A 322-amino-acid polypeptide reads, in one-letter code: uncharacterized protein (322 aa).

Positions 1-13 (MTNADEQNMGQQE) are enriched in polar residues. Disordered stretches follow at residues 1–94 (MTNA…EEYE) and 125–322 (RREM…TDEE). The segment covering 14–31 (GTDTATTAQDTNTQTVGT) has biased composition (low complexity). Polar residues predominate over residues 32–50 (QSENTQNTQQASDAQTEQT). Over residues 64-75 (EVDEDDVLDAQE) the composition is skewed to acidic residues. 4 stretches are compositionally biased toward basic and acidic residues: residues 141-227 (GGDR…RGGD), 235-269 (RPRE…RGGD), 277-295 (RPRE…RTDD), and 308-322 (ARAD…TDEE).

This is an uncharacterized protein from Deinococcus radiodurans (strain ATCC 13939 / DSM 20539 / JCM 16871 / CCUG 27074 / LMG 4051 / NBRC 15346 / NCIMB 9279 / VKM B-1422 / R1).